The sequence spans 123 residues: Ig heavy chain V region HPCG13 (123 aa).

In terms of domain architecture, Ig-like spans 1-114; it reads EVKLVESGGG…GSYWYFDVWG (114 aa).

This Mus musculus (Mouse) protein is Ig heavy chain V region HPCG13.